Consider the following 131-residue polypeptide: Large ribosomal subunit protein bL17 (131 aa).

This sequence belongs to the bacterial ribosomal protein bL17 family. Part of the 50S ribosomal subunit. Contacts protein L32.

This Shewanella frigidimarina (strain NCIMB 400) protein is Large ribosomal subunit protein bL17.